Here is a 234-residue protein sequence, read N- to C-terminus: Large ribosomal subunit protein uL1 (234 aa).

It belongs to the universal ribosomal protein uL1 family. As to quaternary structure, part of the 50S ribosomal subunit.

Its function is as follows. Binds directly to 23S rRNA. The L1 stalk is quite mobile in the ribosome, and is involved in E site tRNA release. Protein L1 is also a translational repressor protein, it controls the translation of the L11 operon by binding to its mRNA. This is Large ribosomal subunit protein uL1 from Klebsiella pneumoniae subsp. pneumoniae (strain ATCC 700721 / MGH 78578).